Consider the following 755-residue polypeptide: 3-isopropylmalate dehydratase (755 aa).

Residues C353, C413, and C416 each coordinate [4Fe-4S] cluster. Disordered stretches follow at residues 427-446 (GERC…GAGG), 471-493 (LTPA…ELEP), and 510-529 (DAPA…AAGM). Over residues 510 to 528 (DAPATGASPPSPAPSDAAG) the composition is skewed to low complexity.

Belongs to the aconitase/IPM isomerase family. In terms of assembly, monomer. [4Fe-4S] cluster is required as a cofactor.

The enzyme catalyses (2R,3S)-3-isopropylmalate = (2S)-2-isopropylmalate. Its pathway is amino-acid biosynthesis; L-leucine biosynthesis; L-leucine from 3-methyl-2-oxobutanoate: step 2/4. Catalyzes the isomerization between 2-isopropylmalate and 3-isopropylmalate, via the formation of 2-isopropylmaleate. The protein is 3-isopropylmalate dehydratase (LEUA) of Rhizomucor pusillus.